Reading from the N-terminus, the 498-residue chain is Glutamate--tRNA ligase (498 aa).

Residues 11-21 (PSPTGHLHIGN) carry the 'HIGH' region motif. The 'KMSKS' region motif lies at 260–264 (KLSKR). An ATP-binding site is contributed by K263.

Belongs to the class-I aminoacyl-tRNA synthetase family. Glutamate--tRNA ligase type 1 subfamily. As to quaternary structure, monomer.

Its subcellular location is the cytoplasm. The enzyme catalyses tRNA(Glu) + L-glutamate + ATP = L-glutamyl-tRNA(Glu) + AMP + diphosphate. In terms of biological role, catalyzes the attachment of glutamate to tRNA(Glu) in a two-step reaction: glutamate is first activated by ATP to form Glu-AMP and then transferred to the acceptor end of tRNA(Glu). In Leuconostoc mesenteroides subsp. mesenteroides (strain ATCC 8293 / DSM 20343 / BCRC 11652 / CCM 1803 / JCM 6124 / NCDO 523 / NBRC 100496 / NCIMB 8023 / NCTC 12954 / NRRL B-1118 / 37Y), this protein is Glutamate--tRNA ligase.